A 458-amino-acid polypeptide reads, in one-letter code: Flap endonuclease 1 (458 aa).

The interval 1 to 105 is N-domain; that stretch reads MGIKGLTGLL…GVLSKRFEKR (105 aa). Residue aspartate 34 participates in Mg(2+) binding. DNA contacts are provided by arginine 47 and arginine 71. The Mg(2+) site is built by aspartate 87, glutamate 159, glutamate 161, aspartate 180, and aspartate 182. An I-domain region spans residues 123–254; it reads DVDRFSRRTV…KSALKLIREF (132 aa). Residue glutamate 159 participates in DNA binding. Residues glycine 232 and aspartate 234 each coordinate DNA. Aspartate 234 serves as a coordination point for Mg(2+). Disordered regions lie at residues 268-347 and 416-458; these read AAAR…IPDE and GFFT…AKKK. 2 stretches are compositionally biased toward acidic residues: residues 275 to 285 and 293 to 309; these read AEEEDEEEAEE and EMPDDEDGEKDSDDEEE. A compositionally biased stretch (basic and acidic residues) spans 310–329; that stretch reads AERRKKAEAAKKKKAQEKAK. An interaction with PCNA region spans residues 410-418; that stretch reads QQGRLDGFF. A compositionally biased stretch (basic and acidic residues) spans 442–452; that stretch reads RKGEDKAEGSG.

The protein belongs to the XPG/RAD2 endonuclease family. FEN1 subfamily. Interacts with PCNA. Three molecules of FEN1 bind to one PCNA trimer with each molecule binding to one PCNA monomer. PCNA stimulates the nuclease activity without altering cleavage specificity. Requires Mg(2+) as cofactor. Post-translationally, phosphorylated. Phosphorylation upon DNA damage induces relocalization to the nuclear plasma.

The protein localises to the nucleus. It localises to the nucleolus. The protein resides in the nucleoplasm. It is found in the mitochondrion. Functionally, structure-specific nuclease with 5'-flap endonuclease and 5'-3' exonuclease activities involved in DNA replication and repair. During DNA replication, cleaves the 5'-overhanging flap structure that is generated by displacement synthesis when DNA polymerase encounters the 5'-end of a downstream Okazaki fragment. It enters the flap from the 5'-end and then tracks to cleave the flap base, leaving a nick for ligation. Also involved in the long patch base excision repair (LP-BER) pathway, by cleaving within the apurinic/apyrimidinic (AP) site-terminated flap. Acts as a genome stabilization factor that prevents flaps from equilibrating into structures that lead to duplications and deletions. Also possesses 5'-3' exonuclease activity on nicked or gapped double-stranded DNA, and exhibits RNase H activity. Also involved in replication and repair of rDNA and in repairing mitochondrial DNA. The protein is Flap endonuclease 1 of Coprinopsis cinerea (strain Okayama-7 / 130 / ATCC MYA-4618 / FGSC 9003) (Inky cap fungus).